We begin with the raw amino-acid sequence, 394 residues long: 3-hydroxybenzoate 6-hydroxylase 1 (394 aa).

Belongs to the 3-hydroxybenzoate 6-hydroxylase family. Homotrimer. The cofactor is FAD.

The enzyme catalyses 3-hydroxybenzoate + NADH + O2 + H(+) = 2,5-dihydroxybenzoate + NAD(+) + H2O. Inhibited by manganese, copper, mercury, and iron ions. Its function is as follows. Catalyzes the NAD- or NADP-dependent conversion of 3-hydroxybenzoate to gentisate. The affinity of the enzyme toward NAD is twice as high as for NADP. The enzyme shows higher specific activities against the intermediates in the degradation of 2,5-xylenol and 3,5-xylenol, 3-hydroxy-4-methylbenzoate and 3-hydroxy-5-methylbenzoate, respectively, than for 3-hydroxybenzoate. It also shows activity against 3-substituted benzoates. In Aquipseudomonas alcaligenes (Pseudomonas alcaligenes), this protein is 3-hydroxybenzoate 6-hydroxylase 1 (xlnD).